The chain runs to 82 residues: Small ribosomal subunit protein bS16 (82 aa).

The protein belongs to the bacterial ribosomal protein bS16 family.

The protein is Small ribosomal subunit protein bS16 of Edwardsiella ictaluri (strain 93-146).